The sequence spans 389 residues: Probable nitrate transporter NarT (389 aa).

12 helical membrane passes run 14–34 (TLSL…MPFI), 45–65 (ISII…PFGY), 69–89 (IVGA…PIFF), 97–117 (GMLM…SVGV), 139–159 (GNIG…IIGW), 161–181 (TTVR…FIFG), 211–231 (WYFI…NYLV), 246–266 (GVFI…GDKF), 268–288 (AVKV…ILGI), 294–314 (LFTV…GLIF), 331–351 (IVSM…TYVA), and 353–373 (LTGS…IALF).

It belongs to the major facilitator superfamily. Nitrate/nitrite porter (TC 2.A.1.8) family.

It localises to the cell membrane. In terms of biological role, probably required for nitrate uptake under anoxic conditions. Also possibly involved in excretion of nitrite produced by the dissimilatory reduction of nitrate. The polypeptide is Probable nitrate transporter NarT (narT) (Staphylococcus aureus (strain bovine RF122 / ET3-1)).